A 416-amino-acid chain; its full sequence is ORC1-type DNA replication protein 9 (416 aa).

ATP contacts are provided by residues 79–83 (SGKSL), Tyr226, and Arg238.

It belongs to the CDC6/cdc18 family.

Functionally, involved in regulation of DNA replication. The sequence is that of ORC1-type DNA replication protein 9 (cdc6i) from Haloarcula marismortui (strain ATCC 43049 / DSM 3752 / JCM 8966 / VKM B-1809) (Halobacterium marismortui).